The following is a 276-amino-acid chain: MQHATDLISIIALGLVCAFIGGMLAQRMRLPPLVGYLVAGIAIGPFTPGFVGDPALASQLAELGVILLMFGVGLHFSIGDLLAVRTIALPGAIVQITVATAMGAGLAWGFGWGAGAGLVFGLALSVASTVVLLRALEGQGLLDSDKGRIAVGWLIVEDLAMVVALVLLPALAPSLGGEAMQAAGHHGPPEHGLWVTLGLTLAKVGVFVAVMLVGGRRLIPYLLGLAARTGSRELFTLAVLASAVGIAFASSELFGVSFALGAFFAGMVLAESDLSH.

7 helical membrane passes run 5 to 25 (TDLI…GMLA), 32 to 52 (PLVG…GFVG), 64 to 84 (GVIL…LLAV), 104 to 124 (AGLA…GLAL), 149 to 169 (IAVG…VLLP), 193 to 213 (LWVT…VMLV), and 244 to 264 (VGIA…GAFF).

Belongs to the monovalent cation:proton antiporter 2 (CPA2) transporter (TC 2.A.37) family.

Its subcellular location is the cell membrane. This is an uncharacterized protein from Methylorubrum extorquens (Methylobacterium dichloromethanicum).